Reading from the N-terminus, the 151-residue chain is Cysteine proteinase inhibitor 10 (151 aa).

The first 22 residues, 1 to 22 (MATSPMLFLVSLLLVLVAAATG), serve as a signal peptide directing secretion. One can recognise a Cystatin domain in the interval 40–109 (GGRTEIRDVG…GVAYYLKVAA (70 aa)). Positions 96-100 (QVVSG) match the Secondary area of contact motif.

The protein belongs to the cystatin family. Phytocystatin subfamily.

It localises to the secreted. In terms of biological role, specific inhibitor of cysteine proteinases. Probably involved in the regulation of endogenous processes and in defense against pests and pathogens. The chain is Cysteine proteinase inhibitor 10 from Oryza sativa subsp. indica (Rice).